The primary structure comprises 128 residues: Fluoride-specific ion channel FluC (128 aa).

Transmembrane regions (helical) follow at residues 6 to 26, 36 to 56, 68 to 88, and 99 to 119; these read LVAL…GLVL, LPTF…AGLA, VLLF…GLET, and IAAA…WLGF. The Na(+) site is built by Gly-76 and Thr-79.

The protein belongs to the fluoride channel Fluc/FEX (TC 1.A.43) family.

It is found in the cell inner membrane. It carries out the reaction fluoride(in) = fluoride(out). Its activity is regulated as follows. Na(+) is not transported, but it plays an essential structural role and its presence is essential for fluoride channel function. Functionally, fluoride-specific ion channel. Important for reducing fluoride concentration in the cell, thus reducing its toxicity. The protein is Fluoride-specific ion channel FluC of Methylobacillus flagellatus (strain ATCC 51484 / DSM 6875 / VKM B-1610 / KT).